The chain runs to 375 residues: Growth/differentiation factor 8 (375 aa).

Residues 1–23 form the signal peptide; sequence MQKLAVYVYIYLFMLISVDPVAL. A propeptide spanning residues 24–266 is cleaved from the precursor; that stretch reads DDGSQPTENA…VTDTPKRSRR (243 aa). N71 carries an N-linked (GlcNAc...) asparagine glycan. Intrachain disulfides connect C272-C282, C281-C340, C309-C372, and C313-C374.

The protein belongs to the TGF-beta family. In terms of assembly, homodimer; disulfide-linked.

The protein localises to the secreted. Its function is as follows. Acts specifically as a negative regulator of skeletal muscle growth. This is Growth/differentiation factor 8 (MSTN) from Anser anser anser (Western greylag goose).